The chain runs to 212 residues: High frequency lysogenization protein HflD homolog (212 aa).

Positions 92-128 (LIALERKLNAKSAALDELGKRIGQLERQLEHFELLSE) form a coiled coil.

The protein belongs to the HflD family.

It localises to the cytoplasm. The protein localises to the cell inner membrane. This Pectobacterium atrosepticum (strain SCRI 1043 / ATCC BAA-672) (Erwinia carotovora subsp. atroseptica) protein is High frequency lysogenization protein HflD homolog.